Reading from the N-terminus, the 728-residue chain is Microtubule-associated protein VP5 (728 aa).

It belongs to the reoviridae microtubule-associated protein family.

Its subcellular location is the virion. The protein localises to the host cytoplasm. It localises to the host cytoskeleton. Functionally, minor inner capsid component. Displays NTPase and RNA 5'-triphosphatase (RTPase) activities. May function as a cofactor of polymerase. Associates with microtubules and plays a role in the formation, structural organization and morphology of viral inclusions, where the assembly of cores and the replication of viral RNA occur. This Aquareovirus C (isolate Golden shiner/USA/GSRV/1977) (AQRV-C) protein is Microtubule-associated protein VP5 (S5).